The sequence spans 172 residues: Large ribosomal subunit protein uL10 (172 aa).

This sequence belongs to the universal ribosomal protein uL10 family. Part of the ribosomal stalk of the 50S ribosomal subunit. The N-terminus interacts with L11 and the large rRNA to form the base of the stalk. The C-terminus forms an elongated spine to which L12 dimers bind in a sequential fashion forming a multimeric L10(L12)X complex.

In terms of biological role, forms part of the ribosomal stalk, playing a central role in the interaction of the ribosome with GTP-bound translation factors. The protein is Large ribosomal subunit protein uL10 of Methylobacterium radiotolerans (strain ATCC 27329 / DSM 1819 / JCM 2831 / NBRC 15690 / NCIMB 10815 / 0-1).